A 192-amino-acid polypeptide reads, in one-letter code: Transcription termination/antitermination protein NusG (192 aa).

Belongs to the NusG family.

Its function is as follows. Participates in transcription elongation, termination and antitermination. The chain is Transcription termination/antitermination protein NusG from Rickettsia prowazekii (strain Madrid E).